We begin with the raw amino-acid sequence, 39 residues long: Photosystem II reaction center protein J (39 aa).

Residues 7–27 form a helical membrane-spanning segment; it reads IPLWLIGTIVGILVIGLIGIY.

It belongs to the PsbJ family. As to quaternary structure, PSII is composed of 1 copy each of membrane proteins PsbA, PsbB, PsbC, PsbD, PsbE, PsbF, PsbH, PsbI, PsbJ, PsbK, PsbL, PsbM, PsbT, PsbX, PsbY, PsbZ, Psb30/Ycf12, at least 3 peripheral proteins of the oxygen-evolving complex and a large number of cofactors. It forms dimeric complexes.

The protein localises to the plastid. It localises to the chloroplast thylakoid membrane. Functionally, one of the components of the core complex of photosystem II (PSII). PSII is a light-driven water:plastoquinone oxidoreductase that uses light energy to abstract electrons from H(2)O, generating O(2) and a proton gradient subsequently used for ATP formation. It consists of a core antenna complex that captures photons, and an electron transfer chain that converts photonic excitation into a charge separation. The sequence is that of Photosystem II reaction center protein J from Welwitschia mirabilis (Tree tumbo).